A 351-amino-acid chain; its full sequence is Renin receptor (351 aa).

The signal sequence occupies residues 1-17; sequence MAVLVVFLSFLVADVFG. Over 18 to 303 the chain is Extracellular; it reads NEFSILRSPG…YNLAYKYNFE (286 aa). A helical membrane pass occupies residues 304-324; it reads YPVVFNLVLWIMIGLALTLIV. Residues 325-351 lie on the Cytoplasmic side of the membrane; sequence TCYNIWNMDPGYDSIIYRMTNQKIRMD. The short motif at 347–351 is the Mediates retrograde transport to the ER element; that stretch reads KIRMD.

As to quaternary structure, interacts with renin. Accessory component of the multisubunit proton-transporting vacuolar (V)-ATPase protein pump. Interacts (via N-terminus) with ATP6AP1 (via N-terminus). Interacts with ATP6V0D1; ATP6V0D1 is a V-ATPase complex subunit and the interaction promotes V-ATPase complex assembly. Interacts with TMEM9; TMEM9 is a V-ATPase assembly regulator and the interaction induces the interaction with ATP6V0D1. Interacts with VMA21 (via N-terminus); VMA21 is a V-ATPase accessory component. Post-translationally, phosphorylated. Proteolytically cleaved by a furin-like convertase in the trans-Golgi network to generate N- and C-terminal fragments. Expressed in the brain.

Its subcellular location is the endoplasmic reticulum membrane. It is found in the lysosome membrane. The protein localises to the cytoplasmic vesicle. It localises to the autophagosome membrane. The protein resides in the cell projection. Its subcellular location is the dendritic spine membrane. It is found in the axon. The protein localises to the endosome membrane. It localises to the clathrin-coated vesicle membrane. The protein resides in the secretory vesicle. Its subcellular location is the synaptic vesicle membrane. Multifunctional protein which functions as a renin, prorenin cellular receptor and is involved in the assembly of the lysosomal proton-transporting V-type ATPase (V-ATPase) and the acidification of the endo-lysosomal system. May mediate renin-dependent cellular responses by activating ERK1 and ERK2. By increasing the catalytic efficiency of renin in AGT/angiotensinogen conversion to angiotensin I, may also play a role in the renin-angiotensin system (RAS). Through its function in V-type ATPase (v-ATPase) assembly and acidification of the lysosome it regulates protein degradation and may control different signaling pathways important for proper brain development, synapse morphology and synaptic transmission. The protein is Renin receptor (ATP6AP2) of Bos taurus (Bovine).